A 63-amino-acid polypeptide reads, in one-letter code: Beta-defensin 5 (63 aa).

A signal peptide spans 1–22; sequence MRIHYLLFSFLLVLLSPLSVFT. Gln23 carries the post-translational modification Pyrrolidone carboxylic acid. Cystine bridges form between Cys31-Cys59, Cys38-Cys52, and Cys42-Cys60.

It belongs to the beta-defensin family.

It is found in the secreted. In terms of biological role, has antibacterial activity. This Rattus norvegicus (Rat) protein is Beta-defensin 5 (Defb5).